The chain runs to 397 residues: tRNA (guanine-N(7)-)-methyltransferase non-catalytic subunit wuho (397 aa).

WD repeat units follow at residues 75 to 115 (KVEV…AQLL), 163 to 202 (GHLSIVYDVLWSEDQQYIITCDRDDKIRVTNYPATFDIHS), 206 to 244 (GHKEFVSGLAMLTEQHIISASGDKTLRVWNYTCGKELLL), and 303 to 343 (AGTW…RASG).

It belongs to the WD repeat TRM82 family. As to quaternary structure, forms a heterodimer with the catalytic subunit Mettl1. Interacts with mei-P26 and weakly interacts with bgcn; required for the function or formation of the mei-P26-bgcn-bam-sxl complex. Interacts with nanos; may be involved in mei-P26-dependent derepression of the BMP signaling pathway. Interacts with Myc; the interaction may be mediated by mei-P26 and may be involved in the regulation of ribosome biogenesis. In testis, it is present at high level in hub cells, a niche for germline stem cells of testis. Ubiquitously expressed in all testicular cells throughout spermatogenesis. Ubiquitously expressed in all germline and somatic cells of the ovary.

It is found in the nucleus. The protein resides in the cytoplasm. It functions in the pathway tRNA modification; N(7)-methylguanine-tRNA biosynthesis. Required for the Mettl1-dependent formation of N(7)-methylguanine at position 46 (m7G46) in tRNA. In the Mettl1-wuho methyltransferase complex, it is required to stabilize and induce conformational changes of the catalytic subunit. Required for binding of nanos mRNA and repression of translation by the mei-P26-bgcn-bam-sxl complex. May cooperate with mei-P26 and nanos to derepress the BMP signaling pathway. May cooperate with mei-P26 to suppress expression of a subset of microRNAs. May cooperate with mei-P26 to regulate bam expression levels in germline cells during gametogenesis. Required to promote mitosis to meiosis transition during gametogenesis. May regulate germline cell division in part by regulating ribosome biogenesis. This chain is tRNA (guanine-N(7)-)-methyltransferase non-catalytic subunit wuho, found in Drosophila persimilis (Fruit fly).